Here is a 100-residue protein sequence, read N- to C-terminus: Urease subunit gamma (100 aa).

The protein belongs to the urease gamma subunit family. As to quaternary structure, heterotrimer of UreA (gamma), UreB (beta) and UreC (alpha) subunits. Three heterotrimers associate to form the active enzyme.

It localises to the cytoplasm. The catalysed reaction is urea + 2 H2O + H(+) = hydrogencarbonate + 2 NH4(+). The protein operates within nitrogen metabolism; urea degradation; CO(2) and NH(3) from urea (urease route): step 1/1. The sequence is that of Urease subunit gamma from Prochlorococcus marinus (strain AS9601).